Consider the following 1094-residue polypeptide: Formin-like protein 1 (1094 aa).

Disordered stretches follow at residues 1–29 (MGNA…KQPM), 173–199 (SGAE…VPKS), and 507–627 (AATP…GVKA). G2 carries N-myristoyl glycine lipidation. At S7 the chain carries Phosphoserine. Pro residues predominate over residues 16 to 28 (ASPPKQPAVPKQP). In terms of domain architecture, GBD/FH3 spans 27–464 (QPMPAAGELE…SRRIPEPEKV (438 aa)). Position 184 is a phosphoserine (S184). A compositionally biased stretch (polar residues) spans 519–529 (RVSTDSPSTAE). 2 stretches are compositionally biased toward pro residues: residues 535–549 (ASPP…PPLP) and 559–610 (PSAP…PGGP). Positions 627 to 1018 (AKKPIQTKFR…DTSGREEPPT (392 aa)) constitute an FH2 domain. S688 bears the Phosphoserine mark. Residues 1002-1017 (WKKEAAADTSGREEPP) are compositionally biased toward basic and acidic residues. Positions 1002–1094 (WKKEAAADTS…PLPVTTDLAL (93 aa)) are disordered. The residue at position 1021 (S1021) is a Phosphoserine. Residues 1049–1082 (SDRDGAIEDIITDLRNQPYIRADTGRRSARRRPP) enclose the DAD domain.

The protein belongs to the formin homology family. Interacts with RAC1, PFN1 and PFN2. Interacts (activated by RAC1) with SRGAP2 (via SH3 domain); regulates the actin filament severing activity of FMNL1. Post-translationally, myristoylation mediates membrane localization. Highly expressed in the spleen, lymph node and bone marrow cells.

The protein resides in the cytoplasm. It localises to the cell membrane. Its subcellular location is the cytoplasmic vesicle. It is found in the phagosome. Its function is as follows. Plays a role in the regulation of cell morphology and cytoskeletal organization. Required in the cortical actin filament dynamics and cell shape. May play a role in the control of cell motility and survival of macrophages. This Mus musculus (Mouse) protein is Formin-like protein 1 (Fmnl1).